The sequence spans 367 residues: Apolipoprotein A-V (367 aa).

Residues 1-20 (MVAVLTWALALLSAFATAQT) form the signal peptide. Ser-56 carries the post-translational modification Phosphoserine.

This sequence belongs to the apolipoprotein A1/A4/E family. In terms of assembly, interacts with GPIHBP1. Interacts with SORL1; this interaction leads to APOA5 internalization and sorting either to lysosomes and degradation, or to the trans-Golgi network. Phosphorylated by FAM20C in the extracellular medium.

The protein resides in the secreted. It localises to the early endosome. It is found in the late endosome. The protein localises to the golgi apparatus. Its subcellular location is the trans-Golgi network. Its function is as follows. Minor apolipoprotein mainly associated with HDL and to a lesser extent with VLDL. May also be associated with chylomicrons. Important determinant of plasma triglyceride (TG) levels by both being a potent stimulator of apo-CII lipoprotein lipase (LPL) TG hydrolysis and an inhibitor of the hepatic VLDL-TG production rate (without affecting the VLDL-apoB production rate). Activates poorly lecithin:cholesterol acyltransferase (LCAT) and does not enhance efflux of cholesterol from macrophages. Binds heparin. The protein is Apolipoprotein A-V (APOA5) of Phoca vitulina (Harbor seal).